The sequence spans 437 residues: Ribosomal protein uS12 methylthiotransferase RimO (437 aa).

In terms of domain architecture, MTTase N-terminal spans 5-116 (PTISVSHLGC…IAEVIQRVET (112 aa)). The [4Fe-4S] cluster site is built by Cys14, Cys50, Cys79, Cys154, Cys158, and Cys161. One can recognise a Radical SAM core domain in the interval 140 to 369 (TTNEAVAYLR…MEIQQPIAAK (230 aa)). The TRAM domain maps to 372–437 (QKCVGQTVEV…DVYDLYGKVI (66 aa)).

Belongs to the methylthiotransferase family. RimO subfamily. [4Fe-4S] cluster serves as cofactor.

Its subcellular location is the cytoplasm. It carries out the reaction L-aspartate(89)-[ribosomal protein uS12]-hydrogen + (sulfur carrier)-SH + AH2 + 2 S-adenosyl-L-methionine = 3-methylsulfanyl-L-aspartate(89)-[ribosomal protein uS12]-hydrogen + (sulfur carrier)-H + 5'-deoxyadenosine + L-methionine + A + S-adenosyl-L-homocysteine + 2 H(+). Its function is as follows. Catalyzes the methylthiolation of an aspartic acid residue of ribosomal protein uS12. The chain is Ribosomal protein uS12 methylthiotransferase RimO from Crocosphaera subtropica (strain ATCC 51142 / BH68) (Cyanothece sp. (strain ATCC 51142)).